Consider the following 91-residue polypeptide: Small ribosomal subunit protein uS15 (91 aa).

This sequence belongs to the universal ribosomal protein uS15 family. Part of the 30S ribosomal subunit. Forms a bridge to the 50S subunit in the 70S ribosome, contacting the 23S rRNA.

Its function is as follows. One of the primary rRNA binding proteins, it binds directly to 16S rRNA where it helps nucleate assembly of the platform of the 30S subunit by binding and bridging several RNA helices of the 16S rRNA. In terms of biological role, forms an intersubunit bridge (bridge B4) with the 23S rRNA of the 50S subunit in the ribosome. The chain is Small ribosomal subunit protein uS15 from Deinococcus geothermalis (strain DSM 11300 / CIP 105573 / AG-3a).